We begin with the raw amino-acid sequence, 825 residues long: Translation initiation factor IF-2 (825 aa).

Basic and acidic residues-rich tracts occupy residues 1–19 (MTKK…DNKK), 35–45 (RKGEKKTEGKR), 70–98 (LLKD…EYKK), and 113–122 (KKVESVEKPA). The interval 1 to 239 (MTKKQENETS…TQRKDRPLPE (239 aa)) is disordered. A compositionally biased stretch (low complexity) spans 158 to 169 (PSSSRRPSSRPS). Positions 181-191 (GRRRKSGKPGR) are enriched in basic residues. Over residues 194 to 208 (QNSYADQGRGANSNR) the composition is skewed to polar residues. Positions 211 to 220 (QRKRKNKKHQ) are enriched in basic residues. Positions 326 to 495 (VRPPVVTIMG…ILEADMLELK (170 aa)) constitute a tr-type G domain. A G1 region spans residues 335-342 (GHVDHGKT). A GTP-binding site is contributed by 335 to 342 (GHVDHGKT). Positions 360 to 364 (GITQN) are G2. Positions 381–384 (DTPG) are G3. Residues 381-385 (DTPGH) and 435-438 (NKMD) each bind GTP. Positions 435–438 (NKMD) are G4. The interval 471–473 (SAK) is G5.

It belongs to the TRAFAC class translation factor GTPase superfamily. Classic translation factor GTPase family. IF-2 subfamily.

It is found in the cytoplasm. In terms of biological role, one of the essential components for the initiation of protein synthesis. Protects formylmethionyl-tRNA from spontaneous hydrolysis and promotes its binding to the 30S ribosomal subunits. Also involved in the hydrolysis of GTP during the formation of the 70S ribosomal complex. This Lactobacillus delbrueckii subsp. bulgaricus (strain ATCC BAA-365 / Lb-18) protein is Translation initiation factor IF-2.